Reading from the N-terminus, the 345-residue chain is S-adenosylmethionine:tRNA ribosyltransferase-isomerase (345 aa).

The protein belongs to the QueA family. In terms of assembly, monomer.

It is found in the cytoplasm. It carries out the reaction 7-aminomethyl-7-carbaguanosine(34) in tRNA + S-adenosyl-L-methionine = epoxyqueuosine(34) in tRNA + adenine + L-methionine + 2 H(+). Its pathway is tRNA modification; tRNA-queuosine biosynthesis. In terms of biological role, transfers and isomerizes the ribose moiety from AdoMet to the 7-aminomethyl group of 7-deazaguanine (preQ1-tRNA) to give epoxyqueuosine (oQ-tRNA). The polypeptide is S-adenosylmethionine:tRNA ribosyltransferase-isomerase (Shewanella oneidensis (strain ATCC 700550 / JCM 31522 / CIP 106686 / LMG 19005 / NCIMB 14063 / MR-1)).